A 380-amino-acid chain; its full sequence is Ribosomal RNA large subunit methyltransferase G (380 aa).

Belongs to the methyltransferase superfamily. RlmG family.

It is found in the cytoplasm. It catalyses the reaction guanosine(1835) in 23S rRNA + S-adenosyl-L-methionine = N(2)-methylguanosine(1835) in 23S rRNA + S-adenosyl-L-homocysteine + H(+). Functionally, specifically methylates the guanine in position 1835 (m2G1835) of 23S rRNA. The polypeptide is Ribosomal RNA large subunit methyltransferase G (Aeromonas hydrophila subsp. hydrophila (strain ATCC 7966 / DSM 30187 / BCRC 13018 / CCUG 14551 / JCM 1027 / KCTC 2358 / NCIMB 9240 / NCTC 8049)).